The following is a 149-amino-acid chain: D-aminoacyl-tRNA deacylase (149 aa).

The Gly-cisPro motif, important for rejection of L-amino acids signature appears at 137 to 138 (GP).

This sequence belongs to the DTD family. In terms of assembly, homodimer.

Its subcellular location is the cytoplasm. It catalyses the reaction glycyl-tRNA(Ala) + H2O = tRNA(Ala) + glycine + H(+). The catalysed reaction is a D-aminoacyl-tRNA + H2O = a tRNA + a D-alpha-amino acid + H(+). Its function is as follows. An aminoacyl-tRNA editing enzyme that deacylates mischarged D-aminoacyl-tRNAs. Also deacylates mischarged glycyl-tRNA(Ala), protecting cells against glycine mischarging by AlaRS. Acts via tRNA-based rather than protein-based catalysis; rejects L-amino acids rather than detecting D-amino acids in the active site. By recycling D-aminoacyl-tRNA to D-amino acids and free tRNA molecules, this enzyme counteracts the toxicity associated with the formation of D-aminoacyl-tRNA entities in vivo and helps enforce protein L-homochirality. In Geobacter sp. (strain M21), this protein is D-aminoacyl-tRNA deacylase.